We begin with the raw amino-acid sequence, 423 residues long: Putative competence-damage inducible protein (423 aa).

The protein belongs to the CinA family.

This chain is Putative competence-damage inducible protein, found in Streptococcus pyogenes serotype M18 (strain MGAS8232).